A 268-amino-acid chain; its full sequence is Tryptophan synthase alpha chain (268 aa).

Active-site proton acceptor residues include E49 and D60.

It belongs to the TrpA family. As to quaternary structure, tetramer of two alpha and two beta chains.

The catalysed reaction is (1S,2R)-1-C-(indol-3-yl)glycerol 3-phosphate + L-serine = D-glyceraldehyde 3-phosphate + L-tryptophan + H2O. It participates in amino-acid biosynthesis; L-tryptophan biosynthesis; L-tryptophan from chorismate: step 5/5. The alpha subunit is responsible for the aldol cleavage of indoleglycerol phosphate to indole and glyceraldehyde 3-phosphate. The sequence is that of Tryptophan synthase alpha chain from Pseudomonas aeruginosa (strain ATCC 15692 / DSM 22644 / CIP 104116 / JCM 14847 / LMG 12228 / 1C / PRS 101 / PAO1).